A 230-amino-acid polypeptide reads, in one-letter code: Large ribosomal subunit protein uL1 (230 aa).

It belongs to the universal ribosomal protein uL1 family. As to quaternary structure, part of the 50S ribosomal subunit.

Binds directly to 23S rRNA. The L1 stalk is quite mobile in the ribosome, and is involved in E site tRNA release. Functionally, protein L1 is also a translational repressor protein, it controls the translation of the L11 operon by binding to its mRNA. In Acidiphilium cryptum (strain JF-5), this protein is Large ribosomal subunit protein uL1.